Consider the following 303-residue polypeptide: Quinolinate synthase (303 aa).

Residues H24 and S41 each contribute to the iminosuccinate site. Residue C86 coordinates [4Fe-4S] cluster. Iminosuccinate is bound by residues 112–114 (YVN) and S129. Position 172 (C172) interacts with [4Fe-4S] cluster. Residues 198–200 (HPE) and T215 contribute to the iminosuccinate site. Residue C260 participates in [4Fe-4S] cluster binding.

Belongs to the quinolinate synthase family. Type 2 subfamily. The cofactor is [4Fe-4S] cluster.

It is found in the cytoplasm. It catalyses the reaction iminosuccinate + dihydroxyacetone phosphate = quinolinate + phosphate + 2 H2O + H(+). The protein operates within cofactor biosynthesis; NAD(+) biosynthesis; quinolinate from iminoaspartate: step 1/1. Functionally, catalyzes the condensation of iminoaspartate with dihydroxyacetone phosphate to form quinolinate. This is Quinolinate synthase from Alkaliphilus metalliredigens (strain QYMF).